The chain runs to 304 residues: Acetylglutamate kinase (304 aa).

Substrate-binding positions include 71 to 72 (GG), Arg-93, and Asn-193.

The protein belongs to the acetylglutamate kinase family. ArgB subfamily.

It localises to the cytoplasm. It catalyses the reaction N-acetyl-L-glutamate + ATP = N-acetyl-L-glutamyl 5-phosphate + ADP. It functions in the pathway amino-acid biosynthesis; L-arginine biosynthesis; N(2)-acetyl-L-ornithine from L-glutamate: step 2/4. Its function is as follows. Catalyzes the ATP-dependent phosphorylation of N-acetyl-L-glutamate. The protein is Acetylglutamate kinase of Streptomyces avermitilis (strain ATCC 31267 / DSM 46492 / JCM 5070 / NBRC 14893 / NCIMB 12804 / NRRL 8165 / MA-4680).